A 59-amino-acid chain; its full sequence is Potassium channel toxin alpha-KTx 15.2 (59 aa).

Positions 1–22 are cleaved as a signal peptide; that stretch reads MKFSSIILLTLLICSMSKFGNC. Q23 carries the pyrrolidone carboxylic acid modification. 3 disulfide bridges follow: C30–C50, C35–C55, and C39–C57.

Belongs to the short scorpion toxin superfamily. Potassium channel inhibitor family. Alpha-KTx 15 subfamily. Expressed by the venom gland.

It localises to the secreted. Functionally, blocks both human ERG1/Kv11.1/KCNH2 potassium channels (in a reversible manner) and A-type voltage-gated potassium channels Kv4/KCND (in an irreversible manner). The presence of the Kv4-associated proteins DPP6 or DPP10 is mandatory to have high-affinity blockade of Kv4.2/KCND2 and Kv4.3/KCND3 channels. In contrast, the presence of the Kv4-associated protein KChIP1/KCNIP1 does not enhance the affinity blockade. May dispose of two functional faces (A and B); the two basic residues (Arg-40 and Lys-41) on the alpha-helix side of the peptide that blocks the hERG current (face A) and the typical dyad through which it blocks A-type currents on the beta-sheet side (face B). In adult rat brain, it binds to sites in the striatum, hippocampus, superior colliculus, and cerebellum. It shares the same target in rat brain than AaTX1 (AC Q867F4) and AmmTX3 (AC P60208). In DPP6 knockout mice, A-type currents are much less affected by the toxin than in wild-type mice. This is Potassium channel toxin alpha-KTx 15.2 from Olivierus martensii (Manchurian scorpion).